We begin with the raw amino-acid sequence, 468 residues long: MSVLLFGVSHRSAPVVVLEQLSIDESDQVKIIDRVLASPLVTEAMVLSTCNRVEVYAVVDAFHGGLSVIGQVLAEHSGMSMGELTKYAYVRYSEAAVEHLFAVASGLDSAVIGEQQVLGQVRRAYAVAESNRTVGRVLHELAQRALSVGKRVHSETAIDAAGASVVSVALGMAERKLGSLAGTTAVVIGAGAMGALSAVHLTRAGVGHIQVLNRSLSRAQRLARRIRESGVPAEALALDRLANVLADADVVVSCTGAVRPVVSLADVHHALAAARRDEATRPLVICDLGMPRDVDPAVARLPCVWVVDVDSVQHEPSAHAAAADVEAARHIVAAEVASYLVGQRMAEVTPTVTALRQRAAEVVEAELLRLDNRLPGLQSVQREEVARTVRRVVDKLLHAPTVRIKQLASAPGGDSYAEALRELFELDQTAVDAVATAGELPVVPSGFDAESRRGGGDMQSSPKRSPSN.

Substrate is bound by residues 49–52, Ser-109, 114–116, and Gln-120; these read TCNR and EQQ. Catalysis depends on Cys-50, which acts as the Nucleophile. 189–194 contacts NADP(+); it reads GAGAMG. The disordered stretch occupies residues 443 to 468; sequence VPSGFDAESRRGGGDMQSSPKRSPSN. The segment covering 458–468 has biased composition (polar residues); the sequence is MQSSPKRSPSN.

Belongs to the glutamyl-tRNA reductase family. In terms of assembly, homodimer.

The enzyme catalyses (S)-4-amino-5-oxopentanoate + tRNA(Glu) + NADP(+) = L-glutamyl-tRNA(Glu) + NADPH + H(+). It functions in the pathway porphyrin-containing compound metabolism; protoporphyrin-IX biosynthesis; 5-aminolevulinate from L-glutamyl-tRNA(Glu): step 1/2. In terms of biological role, catalyzes the NADPH-dependent reduction of glutamyl-tRNA(Glu) to glutamate 1-semialdehyde (GSA). In Mycobacterium tuberculosis (strain ATCC 25177 / H37Ra), this protein is Glutamyl-tRNA reductase.